Consider the following 209-residue polypeptide: Thiamine-phosphate synthase (209 aa).

4-amino-2-methyl-5-(diphosphooxymethyl)pyrimidine-binding positions include Q36–K40 and N68. Mg(2+) is bound by residues D69 and D87. T106 is a binding site for 4-amino-2-methyl-5-(diphosphooxymethyl)pyrimidine. Position 133-135 (S133–T135) interacts with 2-[(2R,5Z)-2-carboxy-4-methylthiazol-5(2H)-ylidene]ethyl phosphate. 4-amino-2-methyl-5-(diphosphooxymethyl)pyrimidine is bound at residue K136. Residue G163 coordinates 2-[(2R,5Z)-2-carboxy-4-methylthiazol-5(2H)-ylidene]ethyl phosphate.

Belongs to the thiamine-phosphate synthase family. It depends on Mg(2+) as a cofactor.

The enzyme catalyses 2-[(2R,5Z)-2-carboxy-4-methylthiazol-5(2H)-ylidene]ethyl phosphate + 4-amino-2-methyl-5-(diphosphooxymethyl)pyrimidine + 2 H(+) = thiamine phosphate + CO2 + diphosphate. It carries out the reaction 2-(2-carboxy-4-methylthiazol-5-yl)ethyl phosphate + 4-amino-2-methyl-5-(diphosphooxymethyl)pyrimidine + 2 H(+) = thiamine phosphate + CO2 + diphosphate. It catalyses the reaction 4-methyl-5-(2-phosphooxyethyl)-thiazole + 4-amino-2-methyl-5-(diphosphooxymethyl)pyrimidine + H(+) = thiamine phosphate + diphosphate. It functions in the pathway cofactor biosynthesis; thiamine diphosphate biosynthesis; thiamine phosphate from 4-amino-2-methyl-5-diphosphomethylpyrimidine and 4-methyl-5-(2-phosphoethyl)-thiazole: step 1/1. Its function is as follows. Condenses 4-methyl-5-(beta-hydroxyethyl)thiazole monophosphate (THZ-P) and 2-methyl-4-amino-5-hydroxymethyl pyrimidine pyrophosphate (HMP-PP) to form thiamine monophosphate (TMP). The sequence is that of Thiamine-phosphate synthase from Azotobacter vinelandii (strain DJ / ATCC BAA-1303).